We begin with the raw amino-acid sequence, 1092 residues long: Extended synaptotagmin-1 (1092 aa).

Residue Met-1 is modified to N-acetylmethionine. The Cytoplasmic segment spans residues 1 to 28 (MEHSPEEGASPEPSGQPPATDSTRDGGS). The tract at residues 1-36 (MEHSPEEGASPEPSGQPPATDSTRDGGSGVPPAGPG) is disordered. The chain crosses the membrane as a helical span at residues 29–49 (GVPPAGPGAASEALAVLTSFG). The Lumenal portion of the chain corresponds to 50–52 (RRL). A helical transmembrane segment spans residues 53 to 73 (LVLVPVYLAGAAGLSVGFVLF). At 74-1092 (GLALYLGWRR…LMDDRDKGGS (1019 aa)) the chain is on the cytoplasmic side. One can recognise an SMP-LTD domain in the interval 125-303 (DVEKAEWLNK…LPNRLLVPLV (179 aa)). C2 domains follow at residues 302–423 (LVPD…DNWY), 444–570 (DAEK…QLSS), 616–738 (DAPP…DEWL), and 769–886 (QVNS…ALSG). Ser-314 is subject to Phosphoserine; by CDK5. Residues Lys-334, Asp-335, Asp-347, Asp-394, Asp-396, Asp-398, Asp-400, and Asp-401 each coordinate Ca(2+). A disordered region spans residues 604–628 (WDRESLETGSSVDAPPRPYHTTPNS). At Lys-804 the chain carries N6-acetyllysine. At Ser-807 the chain carries Phosphoserine. A disordered region spans residues 909–937 (HSHSYSHSHSSSSLNDEPEALGGPTHPAS). A compositionally biased stretch (low complexity) spans 911-921 (HSYSHSHSSSS). A phosphoserine mark is found at Ser-937 and Ser-951. Residues 959-1081 (PLGQVKLTVW…DLSQGAAQWY (123 aa)) enclose the C2 5 domain. Phosphotyrosine is present on Tyr-997. Residues 1006-1013 (KNRSTKRK) form a required for phosphatidylinositol 4,5-bisphosphate-dependent location at the cell membrane region.

The protein belongs to the extended synaptotagmin family. As to quaternary structure, interacts with ESYT2 and ESYT3. Interacts with ADGRD1; inhibiting the G-protein-coupled receptor activity of ADGRD1. Interaction with ADGRD1 is abolished when cytosolic calcium increases, relieving ADGRD1 G-protein-coupled receptor activity. Interacts (phosphorylated form) with SLC2A4. Post-translationally, phosphorylated on Ser residues in insulin-treated adipocytes (in vitro); this promotes interaction with SLC2A4.

It is found in the endoplasmic reticulum membrane. Its subcellular location is the cell membrane. Its function is as follows. Binds calcium (via the C2 domains) and translocates to sites of contact between the endoplasmic reticulum and the cell membrane in response to increased cytosolic calcium levels. Helps tether the endoplasmic reticulum to the cell membrane and promotes the formation of appositions between the endoplasmic reticulum and the cell membrane. Acts as an inhibitor of ADGRD1 G-protein-coupled receptor activity in absence of cytosolic calcium. Binds glycerophospholipids in a barrel-like domain and may play a role in cellular lipid transport. The protein is Extended synaptotagmin-1 (Esyt1) of Mus musculus (Mouse).